Reading from the N-terminus, the 265-residue chain is MSVPGEREQGAGEDPATVRPTQRTLVIIPTYNERENLPLIVGRVHHACPQVHILVVDDGSPDGTGALADELALADPDRVHVMHRTSKAGLGAAYLAGFDWGLRRGYSVLVEMDADGSHAPEELSRLLDAVDAGADLAIGSRYVPGGTVRNWPWRRLVLSKTANTYSRFLLGVGIHDITAGYRAYRREVLEKIDLSAVDSKGYCFQIDLTWRAINNGFSVVEVPITFTERELGVSKMSGSNIREAMFKVAEWGIRGRLDRARGVVR.

A compositionally biased stretch (basic and acidic residues) spans Met1–Gly10. Positions Met1–Thr21 are disordered.

The protein belongs to the glycosyltransferase 2 family. Interacts with Lnt (also called Ppm2, AC A0QZ13) upon coexpression in E.coli, which increases the PPM synthase activity of this protein.

Its subcellular location is the cytoplasm. It carries out the reaction a di-trans,poly-cis-dolichyl phosphate + GDP-alpha-D-mannose = a di-trans,poly-cis-dolichyl beta-D-mannosyl phosphate + GDP. Its function is as follows. Transfers mannose from GDP-mannose to lipid acceptors to form polyprenol monophosphomannose (PPM); catalytic activity in vitro is enhanced by Lnt (AC A0QZ13). PMM is an alkai-stable sugar donor which adds mannose-phosphate residues to triacylated-PIM2, eventually leading to generation of the cell wall glycolipid lipoglycan modulins lipoarabinomannan (LAM) and lipomannan (LM). This chain is Polyprenol monophosphomannose synthase, found in Mycolicibacterium smegmatis (strain ATCC 700084 / mc(2)155) (Mycobacterium smegmatis).